A 261-amino-acid polypeptide reads, in one-letter code: uncharacterized protein (261 aa).

An N-terminal signal peptide occupies residues 1–22; that stretch reads MRYLKKVTIYISLLILTIFIGG. Residue C23 is the site of N-palmitoyl cysteine attachment. The S-diacylglycerol cysteine moiety is linked to residue C23.

The protein belongs to the staphylococcal tandem lipoprotein family.

Its subcellular location is the cell membrane. This is an uncharacterized protein from Staphylococcus epidermidis (strain ATCC 35984 / DSM 28319 / BCRC 17069 / CCUG 31568 / BM 3577 / RP62A).